Consider the following 345-residue polypeptide: Protein lifeguard 1 (345 aa).

The disordered stretch occupies residues 1–115 (MSHEKSFLVS…GNYQEEGPPS (115 aa)). Composition is skewed to pro residues over residues 24 to 46 (APMP…PFQP) and 79 to 98 (GPYP…PPFQ). 7 consecutive transmembrane segments (helical) span residues 139-159 (VFLV…IFTF), 171-191 (VWTY…LSCC), 202-222 (LVAL…IASF), 227-247 (AVIM…IFSM), 257-277 (MGVL…CIFI), 281-301 (ILEI…LAVD), and 320-340 (FAAL…LTII).

The protein belongs to the BI1 family. LFG subfamily.

It localises to the membrane. Functionally, potential apoptotic regulator. This is Protein lifeguard 1 (Grina) from Mus musculus (Mouse).